Consider the following 351-residue polypeptide: Divinyl chlorophyll a/b light-harvesting protein PcbC (351 aa).

6 helical membrane-spanning segments follow: residues 27 to 47, 81 to 101, 140 to 160, 202 to 222, 242 to 262, and 309 to 329; these read FIGSHIGHTGLICFAAGGSTL, GVWTGAGVATIAIFHLIFSAV, FILGHHLIFFGVANIWFVEWA, VMSGHAFLAFVQISGGAWHIA, AVLSWSLAGIGWMAIVAAFWC, and LSNVHYYFGFFFIQGHIWHAL.

The protein belongs to the PsbB/PsbC family. IsiA/Pcb subfamily. As to quaternary structure, the antenna complex consists of divinyl chlorophylls (a and b) and divinyl chlorophyll a/b binding proteins and binds more divinyl chlorophyll b than does the antenna complex from high-light-adapted Prochlorococcus. Requires divinyl chlorophyll a as cofactor. Divinyl chlorophyll b is required as a cofactor.

The protein resides in the cellular thylakoid membrane. Functionally, the antenna complex functions as a light receptor, it captures and delivers excitation energy to photosystems II and I. The Prochlorales pcb genes are not related to higher plant LHCs. This chain is Divinyl chlorophyll a/b light-harvesting protein PcbC (pcbC), found in Prochlorococcus marinus (strain NATL2A).